Consider the following 150-residue polypeptide: Large ribosomal subunit protein uL15 (150 aa).

Positions 1-49 (MELHQLKSVSKSRNHKSKVVGRGHGSGLGKTSSRGQKGQKARKSGLTRL) are disordered. Over residues 10 to 21 (SKSRNHKSKVVG) the composition is skewed to basic residues.

It belongs to the universal ribosomal protein uL15 family. In terms of assembly, part of the 50S ribosomal subunit.

Its function is as follows. Binds to the 23S rRNA. The chain is Large ribosomal subunit protein uL15 from Mycoplasma genitalium (strain ATCC 33530 / DSM 19775 / NCTC 10195 / G37) (Mycoplasmoides genitalium).